Reading from the N-terminus, the 456-residue chain is MPQNTLNTVILAAGKGTRMYSQMPKVLHCIGGKPMVERVIDTAAALNPQNICVVVGHGKEQVLDTVKRDAVWVEQTEQLGTGHAVKTALPHLASEGRTLVLYGDVPLIDVETLETLLEAAGNEVGLLTDVPADPAGLGRIIRDGSGSVTAIVEEKDASATQKTIREINTGILVLPNAKLENWLNSLSSNNAQGEYYLTDLIAKAVADGIKVRPVRVRASHLAAGVNNKRQLAELERIFQTEQAQELLKAGVTLRDPARFDLRGRLKHGQDVVIDVNVVIEGEVELGDNVEIGANCVIKNAKIGANSKIAPFSHLEGCEVGENNRIGPYARLRPQAKLADNVHVGNFVEIKNAAIGKGTKANHLTYIGDAEVGSKTNFGAGTIIANYDGVHKHKTVIGDEVRIGSNCVLVAPVTLGNKVTTGAGSTITRNIEDNKLALARARQTVIEGWMRPEKDKQ.

A pyrophosphorylase region spans residues 1-228 (MPQNTLNTVI…SHLAAGVNNK (228 aa)). UDP-N-acetyl-alpha-D-glucosamine is bound by residues 11 to 14 (LAAG), Lys25, Gln75, 80 to 81 (GT), 102 to 104 (YGD), Gly138, Glu153, Asn168, and Asn226. Residue Asp104 participates in Mg(2+) binding. Asn226 is a binding site for Mg(2+). A linker region spans residues 229 to 249 (RQLAELERIFQTEQAQELLKA). Positions 250–456 (GVTLRDPARF…GWMRPEKDKQ (207 aa)) are N-acetyltransferase. Residues Arg332 and Lys350 each coordinate UDP-N-acetyl-alpha-D-glucosamine. His362 functions as the Proton acceptor in the catalytic mechanism. Residues Tyr365 and Asn376 each contribute to the UDP-N-acetyl-alpha-D-glucosamine site. Residues Ala379, 385 to 386 (NY), Ser404, Ala422, and Arg439 each bind acetyl-CoA.

It in the N-terminal section; belongs to the N-acetylglucosamine-1-phosphate uridyltransferase family. The protein in the C-terminal section; belongs to the transferase hexapeptide repeat family. As to quaternary structure, homotrimer. It depends on Mg(2+) as a cofactor.

It localises to the cytoplasm. The catalysed reaction is alpha-D-glucosamine 1-phosphate + acetyl-CoA = N-acetyl-alpha-D-glucosamine 1-phosphate + CoA + H(+). It catalyses the reaction N-acetyl-alpha-D-glucosamine 1-phosphate + UTP + H(+) = UDP-N-acetyl-alpha-D-glucosamine + diphosphate. Its pathway is nucleotide-sugar biosynthesis; UDP-N-acetyl-alpha-D-glucosamine biosynthesis; N-acetyl-alpha-D-glucosamine 1-phosphate from alpha-D-glucosamine 6-phosphate (route II): step 2/2. It functions in the pathway nucleotide-sugar biosynthesis; UDP-N-acetyl-alpha-D-glucosamine biosynthesis; UDP-N-acetyl-alpha-D-glucosamine from N-acetyl-alpha-D-glucosamine 1-phosphate: step 1/1. It participates in bacterial outer membrane biogenesis; LPS lipid A biosynthesis. Its function is as follows. Catalyzes the last two sequential reactions in the de novo biosynthetic pathway for UDP-N-acetylglucosamine (UDP-GlcNAc). The C-terminal domain catalyzes the transfer of acetyl group from acetyl coenzyme A to glucosamine-1-phosphate (GlcN-1-P) to produce N-acetylglucosamine-1-phosphate (GlcNAc-1-P), which is converted into UDP-GlcNAc by the transfer of uridine 5-monophosphate (from uridine 5-triphosphate), a reaction catalyzed by the N-terminal domain. The chain is Bifunctional protein GlmU from Neisseria gonorrhoeae (strain ATCC 700825 / FA 1090).